The sequence spans 228 residues: 7-cyano-7-deazaguanine synthase (228 aa).

9 to 19 (LSGGPDSTTVL) contributes to the ATP binding site. Cys193, Cys203, Cys206, and Cys209 together coordinate Zn(2+).

The protein belongs to the QueC family. Zn(2+) is required as a cofactor.

The catalysed reaction is 7-carboxy-7-deazaguanine + NH4(+) + ATP = 7-cyano-7-deazaguanine + ADP + phosphate + H2O + H(+). It functions in the pathway purine metabolism; 7-cyano-7-deazaguanine biosynthesis. Catalyzes the ATP-dependent conversion of 7-carboxy-7-deazaguanine (CDG) to 7-cyano-7-deazaguanine (preQ(0)). This chain is 7-cyano-7-deazaguanine synthase, found in Rickettsia rickettsii (strain Iowa).